A 254-amino-acid chain; its full sequence is MNFVQENNHVLYLWAGTVGPEIEQEVNAIKTIPNVQVNVENVERLQLAEYGKSQFDVILAQVATGNSTLVTLLVKLLKPKGKCVFRDDSAASIEQARSNLLLAGFINIVASDSNVYVAEKPDYEVGSKSKLSFAKKSNVAAVWKLDDNEEEERIDDEELLDEDDKAKPTEESLRVCGTTGKRKACKDCSCGLAEELDAEAKGKALTDTSAAKSSCGSCYLGDAFRCATCPYLGMPAFKPGEKIVLTDTQMQADI.

The interval 4–133 (VQENNHVLYL…EVGSKSKLSF (130 aa)) is N-terminal SAM-like domain. The interval 134 to 165 (AKKSNVAAVWKLDDNEEEERIDDEELLDEDDK) is linker. Residues C176, C185, C188, and C190 each coordinate [2Fe-2S] cluster. A fe-S binding site A region spans residues 176-190 (CGTTGKRKACKDCSC). C215, C218, C226, and C229 together coordinate [4Fe-4S] cluster. 2 consecutive short sequence motifs (cx2C motif) follow at residues 215–218 (CGSC) and 226–229 (CATC). Residues 215–229 (CGSCYLGDAFRCATC) are fe-S binding site B.

Belongs to the anamorsin family. In terms of assembly, monomer. Requires [2Fe-2S] cluster as cofactor. [4Fe-4S] cluster serves as cofactor.

The protein localises to the cytoplasm. The protein resides in the mitochondrion intermembrane space. Functionally, component of the cytosolic iron-sulfur (Fe-S) protein assembly (CIA) machinery. Required for the maturation of extramitochondrial Fe-S proteins. Part of an electron transfer chain functioning in an early step of cytosolic Fe-S biogenesis, facilitating the de novo assembly of a [4Fe-4S] cluster on the cytosolic Fe-S scaffold complex. Electrons are transferred from NADPH via a FAD- and FMN-containing diflavin oxidoreductase. Together with the diflavin oxidoreductase, also required for the assembly of the diferric tyrosyl radical cofactor of ribonucleotide reductase (RNR), probably by providing electrons for reduction during radical cofactor maturation in the catalytic small subunit. The chain is Anamorsin homolog from Anopheles gambiae (African malaria mosquito).